Here is a 98-residue protein sequence, read N- to C-terminus: snRNA-activating protein complex subunit 5 (98 aa).

Residues 73-82 show a composition bias toward polar residues; it reads QTTLELSTKS. Positions 73-98 are disordered; it reads QTTLELSTKSHVTEEEEEEEEEESDS. Position 85 is a phosphothreonine (Thr85). Positions 86–98 are enriched in acidic residues; it reads EEEEEEEEEESDS.

In terms of assembly, part of the SNAPc complex composed of 5 subunits: SNAPC1, SNAPC2, SNAPC3, SNAPC4 and SNAPC5. SNAPC5 interacts with SNAPC4.

It is found in the nucleus. Part of the SNAPc complex required for the transcription of both RNA polymerase II and III small-nuclear RNA genes. Binds to the proximal sequence element (PSE), a non-TATA-box basal promoter element common to these 2 types of genes. Recruits TBP and BRF2 to the U6 snRNA TATA box. The chain is snRNA-activating protein complex subunit 5 (SNAPC5) from Homo sapiens (Human).